A 336-amino-acid chain; its full sequence is Probable allantoicase (336 aa).

The protein belongs to the allantoicase family.

It carries out the reaction allantoate + H2O = (S)-ureidoglycolate + urea. Its pathway is nitrogen metabolism; (S)-allantoin degradation; (S)-ureidoglycolate from allantoate (aminidohydrolase route): step 1/1. The polypeptide is Probable allantoicase (Acinetobacter baumannii (strain SDF)).